The chain runs to 282 residues: Probable endonuclease 4 (282 aa).

Positions 69, 109, 145, 179, 182, 216, 229, 231, and 261 each coordinate Zn(2+).

The protein belongs to the AP endonuclease 2 family. Zn(2+) is required as a cofactor.

It catalyses the reaction Endonucleolytic cleavage to 5'-phosphooligonucleotide end-products.. Functionally, endonuclease IV plays a role in DNA repair. It cleaves phosphodiester bonds at apurinic or apyrimidinic (AP) sites, generating a 3'-hydroxyl group and a 5'-terminal sugar phosphate. This Campylobacter fetus subsp. fetus (strain 82-40) protein is Probable endonuclease 4.